The chain runs to 217 residues: Adenylate kinase (217 aa).

Gly10–Thr15 is a binding site for ATP. An NMP region spans residues Ser30–Val59. Residues Thr31, Arg36, Gly57–Val59, Gly85–Arg88, and Gln92 each bind AMP. The LID stretch occupies residues Gly122–Asp159. ATP-binding positions include Arg123 and Thr132–Tyr133. AMP contacts are provided by Arg156 and Arg167. Gly203 is a binding site for ATP.

It belongs to the adenylate kinase family. As to quaternary structure, monomer.

Its subcellular location is the cytoplasm. The catalysed reaction is AMP + ATP = 2 ADP. Its pathway is purine metabolism; AMP biosynthesis via salvage pathway; AMP from ADP: step 1/1. Catalyzes the reversible transfer of the terminal phosphate group between ATP and AMP. Plays an important role in cellular energy homeostasis and in adenine nucleotide metabolism. The polypeptide is Adenylate kinase (Methylibium petroleiphilum (strain ATCC BAA-1232 / LMG 22953 / PM1)).